Reading from the N-terminus, the 107-residue chain is UPF0145 protein PM1668 (107 aa).

This sequence belongs to the UPF0145 family.

The chain is UPF0145 protein PM1668 from Pasteurella multocida (strain Pm70).